A 307-amino-acid polypeptide reads, in one-letter code: Ribonuclease Z (307 aa).

Positions 61, 63, 65, 66, 138, 208, and 264 each coordinate Zn(2+). Asp65 (proton acceptor) is an active-site residue.

Belongs to the RNase Z family. Homodimer. It depends on Zn(2+) as a cofactor.

The enzyme catalyses Endonucleolytic cleavage of RNA, removing extra 3' nucleotides from tRNA precursor, generating 3' termini of tRNAs. A 3'-hydroxy group is left at the tRNA terminus and a 5'-phosphoryl group is left at the trailer molecule.. Its function is as follows. Zinc phosphodiesterase, which displays some tRNA 3'-processing endonuclease activity. Probably involved in tRNA maturation, by removing a 3'-trailer from precursor tRNA. Also shows activity toward a broad range of substrates, such as intron containing pre-tRNAs, 5' extended precursors and non-RNA substrates. The chain is Ribonuclease Z from Pyrococcus furiosus (strain ATCC 43587 / DSM 3638 / JCM 8422 / Vc1).